Here is a 112-residue protein sequence, read N- to C-terminus: Cell cycle protein GpsB (112 aa).

The stretch at 42 to 77 forms a coiled coil; the sequence is YQKMADMNNEVVKLSEENNKLKKEVEELRLRVATSR. The tract at residues 75-97 is disordered; sequence TSRPSDNKSFSSNNSSSSNNNVD. Positions 81-95 are enriched in low complexity; the sequence is NKSFSSNNSSSSNNN.

This sequence belongs to the GpsB family. As to quaternary structure, forms polymers through the coiled coil domains. Interacts with PBP1, MreC and EzrA.

Its subcellular location is the cytoplasm. Its function is as follows. Divisome component that associates with the complex late in its assembly, after the Z-ring is formed, and is dependent on DivIC and PBP2B for its recruitment to the divisome. Together with EzrA, is a key component of the system that regulates PBP1 localization during cell cycle progression. Its main role could be the removal of PBP1 from the cell pole after pole maturation is completed. Also contributes to the recruitment of PBP1 to the division complex. Not essential for septum formation. This is Cell cycle protein GpsB from Staphylococcus haemolyticus (strain JCSC1435).